The sequence spans 198 residues: V-type proton ATPase subunit E (198 aa).

Belongs to the V-ATPase E subunit family.

In terms of biological role, produces ATP from ADP in the presence of a proton gradient across the membrane. This is V-type proton ATPase subunit E from Borrelia recurrentis (strain A1).